The primary structure comprises 504 residues: ATP synthase subunit alpha (504 aa).

171 to 178 (GDRQTGKT) lines the ATP pocket.

It belongs to the ATPase alpha/beta chains family. In terms of assembly, F-type ATPases have 2 components, CF(1) - the catalytic core - and CF(0) - the membrane proton channel. CF(1) has five subunits: alpha(3), beta(3), gamma(1), delta(1), epsilon(1). CF(0) has three main subunits: a(1), b(2) and c(9-12). The alpha and beta chains form an alternating ring which encloses part of the gamma chain. CF(1) is attached to CF(0) by a central stalk formed by the gamma and epsilon chains, while a peripheral stalk is formed by the delta and b chains.

It is found in the cell inner membrane. It catalyses the reaction ATP + H2O + 4 H(+)(in) = ADP + phosphate + 5 H(+)(out). Its function is as follows. Produces ATP from ADP in the presence of a proton gradient across the membrane. The alpha chain is a regulatory subunit. In Helicobacter hepaticus (strain ATCC 51449 / 3B1), this protein is ATP synthase subunit alpha.